The chain runs to 280 residues: Gem-associated protein 2 (280 aa).

Positions 1-39 are may play a minor inhibitory role in snRNA binding to 5Sm (SNRPD1, SNRPD2, SNRPE, SNRPF and SNRPG) during snRNP assembly by inserting into the RNA binding pocket of 5Sm; sequence MRRAELAGLKTMAWVPAESAVEELMPRLLPVEPCDLTEG. A phosphoserine mark is found at Ser-81 and Ser-166.

It belongs to the gemin-2 family. As to quaternary structure, monomer. Part of the core SMN complex that contains SMN1, GEMIN2/SIP1, DDX20/GEMIN3, GEMIN4, GEMIN5, GEMIN6, GEMIN7, GEMIN8 and STRAP/UNRIP. Part of the SMN-Sm complex that contains SMN1, GEMIN2/SIP1, DDX20/GEMIN3, GEMIN4, GEMIN5, GEMIN6, GEMIN7, GEMIN8, STRAP/UNRIP and the Sm proteins SNRPB, SNRPD1, SNRPD2, SNRPD3, SNRPE, SNRPF and SNRPG. Interacts with GEMIN5; the interaction is direct. Interacts (via C-terminus) with SMN1; the interaction is direct. Interacts with SNRPD1; the interaction is direct. Interacts with SNRPD2; the interaction is direct. Interacts (via N-terminus) with SNRPF; the interaction is direct. Interacts (via N-terminus) with SNRPE; the interaction is direct. Interacts (via N-terminus) with SNRPG; the interaction is direct.

It is found in the nucleus. It localises to the gem. The protein localises to the cytoplasm. Functionally, the SMN complex catalyzes the assembly of small nuclear ribonucleoproteins (snRNPs), the building blocks of the spliceosome, and thereby plays an important role in the splicing of cellular pre-mRNAs. Most spliceosomal snRNPs contain a common set of Sm proteins SNRPB, SNRPD1, SNRPD2, SNRPD3, SNRPE, SNRPF and SNRPG that assemble in a heptameric protein ring on the Sm site of the small nuclear RNA to form the core snRNP (Sm core). In the cytosol, the Sm proteins SNRPD1, SNRPD2, SNRPE, SNRPF and SNRPG (5Sm) are trapped in an inactive 6S pICln-Sm complex by the chaperone CLNS1A that controls the assembly of the core snRNP. To assemble core snRNPs, the SMN complex accepts the trapped 5Sm proteins from CLNS1A. Binding of snRNA inside 5Sm ultimately triggers eviction of the SMN complex, thereby allowing binding of SNRPD3 and SNRPB to complete assembly of the core snRNP. Within the SMN complex, GEMIN2 constrains the conformation of 5Sm, thereby promoting 5Sm binding to snRNA containing the snRNP code (a nonameric Sm site and a 3'-adjacent stem-loop), thus preventing progression of assembly until a cognate substrate is bound. This is Gem-associated protein 2 from Homo sapiens (Human).